Consider the following 188-residue polypeptide: UPF0340 protein BH3766 (188 aa).

The protein belongs to the UPF0340 family.

In Halalkalibacterium halodurans (strain ATCC BAA-125 / DSM 18197 / FERM 7344 / JCM 9153 / C-125) (Bacillus halodurans), this protein is UPF0340 protein BH3766.